The primary structure comprises 162 residues: Protein SLM4 (162 aa).

A helical membrane pass occupies residues 127–144 (LLLLFIAEGSFPYGLLVI).

In terms of assembly, component of the GSE complex composed of GTR1, GTR2, SLM4, MEH1 and LTV1. Component of the EGO complex, at least composed of GTR2, SLM4 and MEH1.

The protein resides in the vacuole membrane. Functionally, component of the GSE complex, a GTPase complex required for intracellular sorting of GAP1 out of the endosome. Component of the EGO complex, a complex involved in the regulation of microautophagy. This is Protein SLM4 (SLM4) from Saccharomyces cerevisiae (strain ATCC 204508 / S288c) (Baker's yeast).